Reading from the N-terminus, the 513-residue chain is Na(+)/H(+) antiporter NhaB (513 aa).

The next 12 membrane-spanning stretches (helical) occupy residues 23-43 (LALIIFLIVNPLIFLISPFVA), 52-72 (IFTLAMALKCYPLLPGGLLAI), 97-117 (LLLMFMVAGIYFMKQLLLFIF), 120-140 (LLLSIRSKMLLSLSFCVAAAF), 144-164 (FLDALTVVAVVISVAVGFYGI), 202-222 (LMMHAGVGTALGGVMTMVGEP), 238-258 (FFLRMSPVTVPVLICGLLTCL), 303-323 (AIIGVWLVTALALHLAEVGLI), 348-368 (TESLPFTALLTVFFSVVAVII), 391-411 (LFYIFNGLLSSISDNVFVGTI), 447-467 (ATPNGQAAFLFLLTSALAPLI), and 475-495 (VWMALPYTLVLTVAGLLCVEF).

It belongs to the NhaB Na(+)/H(+) (TC 2.A.34) antiporter family.

Its subcellular location is the cell inner membrane. It carries out the reaction 2 Na(+)(in) + 3 H(+)(out) = 2 Na(+)(out) + 3 H(+)(in). Na(+)/H(+) antiporter that extrudes sodium in exchange for external protons. The protein is Na(+)/H(+) antiporter NhaB of Escherichia coli O127:H6 (strain E2348/69 / EPEC).